The primary structure comprises 368 residues: tRNA/tmRNA (uracil-C(5))-methyltransferase (368 aa).

5 residues coordinate S-adenosyl-L-methionine: glutamine 190, tyrosine 218, asparagine 223, glutamate 239, and aspartate 301. Cysteine 326 serves as the catalytic Nucleophile. Glutamate 360 acts as the Proton acceptor in catalysis.

It belongs to the class I-like SAM-binding methyltransferase superfamily. RNA M5U methyltransferase family. TrmA subfamily.

The catalysed reaction is uridine(54) in tRNA + S-adenosyl-L-methionine = 5-methyluridine(54) in tRNA + S-adenosyl-L-homocysteine + H(+). It catalyses the reaction uridine(341) in tmRNA + S-adenosyl-L-methionine = 5-methyluridine(341) in tmRNA + S-adenosyl-L-homocysteine + H(+). Functionally, dual-specificity methyltransferase that catalyzes the formation of 5-methyluridine at position 54 (m5U54) in all tRNAs, and that of position 341 (m5U341) in tmRNA (transfer-mRNA). This chain is tRNA/tmRNA (uracil-C(5))-methyltransferase, found in Aliivibrio fischeri (strain MJ11) (Vibrio fischeri).